Reading from the N-terminus, the 510-residue chain is MGNGGRCMVEVVILLVLMAMSQGCDAQNTTGGLTRKSFPNGFVFGTASSAYQYEGAVKEDGRGPTIWDKFAHTFGKIIDFSNADVAVDQYHRFEEDIQLMADMGMDAYRFSISWSRIFPNGTGEVNQAGIDHYNKLINALLAKGIEPYVTLYHWDLPQALEDKYTGWLDRQIINDYAVYAETCFQAFGDRVKHWITFNEPHTVAVQAYDSGMHAPGRCSVLLHLYCKKGNSGTEPYIVAHNMILSHATVSDIYRKKYKASQNGELGISFDVIWYEPMSNSTADIEAAKRAQEFQLGWFADPFFFGDYPATMRSRVGSRLPKFTEKEAALVNGSLDFMGINHYTTFYTKDDQSTVIEKLLNNTLADTATISVPFRNGQPIGDRANSIWLYIVPRSMRILMNYVKDRYNKPTVYITENGMDDGNSPFISLKNALKDDKRTKYHNDYLTNLADSIREDGCDVRGYFAWSLLDNWEWAAGYTSRFGLYYVDYKNRKRYPKNSVQWFKNLLASSS.

The signal sequence occupies residues 1–26 (MGNGGRCMVEVVILLVLMAMSQGCDA). An N-linked (GlcNAc...) asparagine glycan is attached at N28. Residue Q52 coordinates a beta-D-glucoside. An N-linked (GlcNAc...) asparagine glycan is attached at N120. Residues H153 and 198 to 199 (NE) contribute to the a beta-D-glucoside site. E199 serves as the catalytic Proton donor. C218 and C226 are disulfide-bonded. N-linked (GlcNAc...) asparagine glycosylation is found at N279 and N331. Y342 provides a ligand contact to a beta-D-glucoside. N360 carries N-linked (GlcNAc...) asparagine glycosylation. A beta-D-glucoside contacts are provided by residues E415, W465, 472 to 473 (EW), and F481. E415 (nucleophile) is an active-site residue.

The protein belongs to the glycosyl hydrolase 1 family.

It catalyses the reaction Hydrolysis of terminal, non-reducing beta-D-glucosyl residues with release of beta-D-glucose.. This Oryza sativa subsp. japonica (Rice) protein is Beta-glucosidase 34 (BGLU34).